Reading from the N-terminus, the 224-residue chain is Metalloproteinase inhibitor 4 (224 aa).

The first 29 residues, Met-1–Ala-29, serve as a signal peptide directing secretion. A Zn(2+)-binding site is contributed by Cys-30. 2 involved in metalloproteinase-binding regions span residues Cys-30–Ala-33 and Ser-99–Ser-100. 6 disulfide bridges follow: Cys-30–Cys-102, Cys-32–Cys-131, Cys-42–Cys-156, Cys-158–Cys-205, Cys-163–Cys-168, and Cys-176–Cys-197. One can recognise an NTR domain in the interval Cys-30–Cys-156.

This sequence belongs to the protease inhibitor I35 (TIMP) family. As to expression, expressed in retina, smooth muscle, skin, pancreas, skeletal muscle, heart, brain, lung, kidney and testis. Not found in cartilage, spleen and liver.

The protein resides in the secreted. Functionally, complexes with metalloproteinases (such as collagenases) and irreversibly inactivates them by binding to their catalytic zinc cofactor. The protein is Metalloproteinase inhibitor 4 (Timp4) of Rattus norvegicus (Rat).